Reading from the N-terminus, the 279-residue chain is uncharacterized protein (279 aa).

Disordered stretches follow at residues 50–109 (YTYN…YNKN) and 249–279 (SQSQ…SPKL). A compositionally biased stretch (low complexity) spans 68–109 (NNNSNYNNNNNNNNNNNNNNNNNNNNNNNKNNNNNNYNYNKN).

This is an uncharacterized protein from Dictyostelium discoideum (Social amoeba).